Here is a 72-residue protein sequence, read N- to C-terminus: MAMNTVFLHLSEEAIKRLNKLRGWRKVSRSAILREAVEQYLERQQFPVRKAKGGRQRGETVVVDDQCKEHKE.

Residues 51–72 form a disordered region; that stretch reads AKGGRQRGETVVVDDQCKEHKE.

The protein belongs to the YiiE family.

This is an uncharacterized protein from Escherichia coli O6:K15:H31 (strain 536 / UPEC).